We begin with the raw amino-acid sequence, 326 residues long: Microtubule-associated protein RP/EB family member 2 (326 aa).

S9 carries the phosphoserine modification. The Calponin-homology (CH) domain occupies 56 to 158 (TMSRHDIIAW…FIQWFKKFYD (103 aa)). Position 166 is a phosphotyrosine (Y166). Disordered stretches follow at residues 170–239 (EARQ…DKDL) and 297–326 (YASD…QEEY). A DCTN1-binding region spans residues 186 to 326 (QIFNLPKKSH…DQQPQQQEEY (141 aa)). Low complexity predominate over residues 199–233 (SPTAGAAKSSPASKPGSTPSRPSSAKRASSSGSAS). Residues S218 and S235 each carry the phosphoserine modification. The 71-residue stretch at 235-305 (SDKDLETQVI…LYASDEQEGQ (71 aa)) folds into the EB1 C-terminal domain. The APC-binding stretch occupies residues 258-301 (EGVEKERDFYFGKLREIELLCQEHGQENDDLVQRLMEVLYASDE). A compositionally biased stretch (acidic residues) spans 300 to 312 (DEQEGQTEEPEAE). Positions 317-326 (DQQPQQQEEY) are enriched in low complexity.

This sequence belongs to the MAPRE family. In terms of assembly, interacts with DCTN1. Interacts with APC (via C-terminal). Interacts with monomeric and polymerized tubulin. Interacts with SLAIN1. Interacts (via the N-terminal region) with BAG1. Interacts with ASB14. In terms of processing, ubiquitinated in an ASB14-dependent manner; leading to proteasomal degradation. Phosphorylated at Ser-235 by CK2 leading to enhanced cell adhesion. Phosphorylated by CDK1 and AURKB during mitosis reduces the binding affinity of MAPRE2 for microtubules. As to expression, expressed during early stages of apico-basal epithelial differentiation but down-regulated in most cells at later stages.

The protein resides in the cytoplasm. The protein localises to the cytoskeleton. Its subcellular location is the spindle. Functionally, adapter protein that is involved in microtubule polymerization, and spindle function by stabilizing microtubules and anchoring them at centrosomes. Therefore, ensures mitotic progression and genome stability. Acts as a central regulator of microtubule reorganization in apico-basal epithelial differentiation. Plays a role during oocyte meiosis by regulating microtubule dynamics. Participates in neurite growth by interacting with plexin B3/PLXNB3 and microtubule reorganization during apico-basal epithelial differentiation. Plays also an essential role for cell migration and focal adhesion dynamics. Mechanistically, recruits HAX1 to microtubules in order to regulate focal adhesion dynamics. The protein is Microtubule-associated protein RP/EB family member 2 (Mapre2) of Mus musculus (Mouse).